A 244-amino-acid chain; its full sequence is Protein crossbronx (244 aa).

One can recognise a UBC core domain in the interval 20-176; that stretch reads QQEYKILAEY…VQENIKESKE (157 aa). Residues 209–244 are disordered; the sequence is AGRSKQTEPSAQQGNGGHATGLSWVKEGEFKPLSIE.

It belongs to the ubiquitin-conjugating enzyme family. FTS subfamily.

This is Protein crossbronx (cbx) from Drosophila sechellia (Fruit fly).